We begin with the raw amino-acid sequence, 193 residues long: dTTP/UTP pyrophosphatase (193 aa).

The active-site Proton acceptor is Asp-77.

This sequence belongs to the Maf family. YhdE subfamily. The cofactor is a divalent metal cation.

Its subcellular location is the cytoplasm. It catalyses the reaction dTTP + H2O = dTMP + diphosphate + H(+). It carries out the reaction UTP + H2O = UMP + diphosphate + H(+). Functionally, nucleoside triphosphate pyrophosphatase that hydrolyzes dTTP and UTP. May have a dual role in cell division arrest and in preventing the incorporation of modified nucleotides into cellular nucleic acids. The sequence is that of dTTP/UTP pyrophosphatase from Phocaeicola vulgatus (strain ATCC 8482 / DSM 1447 / JCM 5826 / CCUG 4940 / NBRC 14291 / NCTC 11154) (Bacteroides vulgatus).